Consider the following 1487-residue polypeptide: Probable lysine-specific demethylase SE14 (1487 aa).

The segment at 1–23 (MPPQPPPAASASASAPDPAVPAW) is disordered. Low complexity predominate over residues 9 to 22 (ASASASAPDPAVPA). The 42-residue stretch at 30-71 (APEYRPTESEFADPIAFLSRVEREAAAYGICKVIPPHPRPSR) folds into the JmjN domain. Residues 86–104 (CDAPAPSPAAASDSSIPPS) show a composition bias toward low complexity. Residues 86-113 (CDAPAPSPAAASDSSIPPSSSSPPPVSA) form a disordered region. The JmjC domain maps to 232-398 (NSPWNLQAIA…FAKEAAVRRA (167 aa)). His-275, Glu-277, and His-366 together coordinate Fe cation. Disordered regions lie at residues 494-555 (SCSK…DDGD) and 684-718 (YGDT…PDVE). Basic and acidic residues-rich tracts occupy residues 498 to 507 (APEKKGEDGP) and 542 to 551 (QAPEGEKLDT). The C2H2-type 1; degenerate zinc-finger motif lies at 1377–1400 (FQCDIEFCDMTFETKAELRAHQRN). C2H2-type zinc fingers lie at residues 1400-1424 (NICT…QCVH), 1430-1454 (FKCP…IRVH), and 1460-1486 (YKCS…KFNH).

The cofactor is Fe(2+).

The protein resides in the nucleus. In terms of biological role, histone demethylase that demethylates 'Lys-4' (H3K4me) of histone H3. Involved in the control of flowering time. Has a suppressive effect on floral transition under long day conditions through the demethylation of H3K4me3 in the promoter region of the flower-promoting signal HD3B/RFT1. This Oryza sativa subsp. japonica (Rice) protein is Probable lysine-specific demethylase SE14 (SE14).